The chain runs to 91 residues: MKTVTMKVTGLVQGVGFRWTTQMIAQDLGITGTVKNNPDGSVSIVAQGEELPLEHFIKKIKASPSVAGHVDHVDLNTVSDAEKFTRFSVVY.

Residues 3-91 (TVTMKVTGLV…EKFTRFSVVY (89 aa)) form the Acylphosphatase-like domain. Catalysis depends on residues Arg-18 and Asn-36.

It belongs to the acylphosphatase family.

It catalyses the reaction an acyl phosphate + H2O = a carboxylate + phosphate + H(+). The protein is Acylphosphatase (acyP) of Lactobacillus gasseri (strain ATCC 33323 / DSM 20243 / BCRC 14619 / CIP 102991 / JCM 1131 / KCTC 3163 / NCIMB 11718 / NCTC 13722 / AM63).